Reading from the N-terminus, the 212-residue chain is Ion-translocating oxidoreductase complex subunit G (212 aa).

Residues 9 to 29 form a helical membrane-spanning segment; it reads GLLLGLFALLCTGLVAIVNQL. The residue at position 176 (Thr-176) is an FMN phosphoryl threonine.

The protein belongs to the RnfG family. As to quaternary structure, the complex is composed of six subunits: RnfA, RnfB, RnfC, RnfD, RnfE and RnfG. The cofactor is FMN.

It is found in the cell inner membrane. Its function is as follows. Part of a membrane-bound complex that couples electron transfer with translocation of ions across the membrane. The sequence is that of Ion-translocating oxidoreductase complex subunit G from Shewanella piezotolerans (strain WP3 / JCM 13877).